A 319-amino-acid chain; its full sequence is MLKSVQGLWKDFFGIRDDGRKREYGSLDEVRKRSALRSRRKQMRPTGKSVLKRPRKVTDRKTEEKIRTNRRKTPKRRLTKIFQTIRDVFSNDNENMSKMQNVCGDMTRILKKRSQGRPSYMDTDTAKSRILRSDAFKRKISELKYNKQRISELRSGSSDGSSGKDRNQSLYLDREILLQRQIKKRDEKIKALESKLQSLQEALNYSNEKYRILEDLLDSSNIHPSYTKSRRTMSNLARENDEIKPLKIDLSPSPIRRTNSLFTSSPMKTYNRDGNIPEMQPLQENISPACPTPPYRSRETEKEDETLSPISVDFSSYLS.

Residues 34–43 (SALRSRRKQM) show a composition bias toward basic residues. The segment at 34 to 74 (SALRSRRKQMRPTGKSVLKRPRKVTDRKTEEKIRTNRRKTP) is disordered. A compositionally biased stretch (basic and acidic residues) spans 56-67 (KVTDRKTEEKIR). A phosphoserine mark is found at serine 251 and serine 260. Residues 278–319 (EMQPLQENISPACPTPPYRSRETEKEDETLSPISVDFSSYLS) form a disordered region.

Interacts with NDC1 and MPS2.

In Saccharomyces cerevisiae (strain ATCC 204508 / S288c) (Baker's yeast), this protein is NAP1-binding protein (NBP1).